The chain runs to 49 residues: Large ribosomal subunit protein bL33B (49 aa).

It belongs to the bacterial ribosomal protein bL33 family.

In Limosilactobacillus fermentum (strain NBRC 3956 / LMG 18251) (Lactobacillus fermentum), this protein is Large ribosomal subunit protein bL33B.